Consider the following 185-residue polypeptide: Monothiol glutaredoxin-S4, mitochondrial (185 aa).

Residues Met1–Tyr36 constitute a mitochondrion transit peptide. Residues Ser37–Met74 form a disordered region. A compositionally biased stretch (low complexity) spans Asp43–Thr53. Polar residues predominate over residues Asp64–Met74. Residues Asp77–Arg179 form the Glutaredoxin domain. Lys94 provides a ligand contact to glutathione. Cys102 lines the [2Fe-2S] cluster pocket. Residues Lys131, Phe143, and Ser156–Asp157 each bind glutathione.

The protein belongs to the glutaredoxin family. CGFS subfamily.

Its subcellular location is the mitochondrion. May only reduce GSH-thiol disulfides, but not protein disulfides. The sequence is that of Monothiol glutaredoxin-S4, mitochondrial (GRXS4) from Oryza sativa subsp. japonica (Rice).